A 188-amino-acid chain; its full sequence is Photosystem I assembly protein Ycf4 (188 aa).

Helical transmembrane passes span W28–L48 and I68–I88.

The protein belongs to the Ycf4 family.

It is found in the cellular thylakoid membrane. In terms of biological role, seems to be required for the assembly of the photosystem I complex. The polypeptide is Photosystem I assembly protein Ycf4 (Cyanothece sp. (strain PCC 7425 / ATCC 29141)).